Reading from the N-terminus, the 156-residue chain is Small ribosomal subunit protein uS7 (156 aa).

It belongs to the universal ribosomal protein uS7 family. In terms of assembly, part of the 30S ribosomal subunit. Contacts proteins S9 and S11.

One of the primary rRNA binding proteins, it binds directly to 16S rRNA where it nucleates assembly of the head domain of the 30S subunit. Is located at the subunit interface close to the decoding center, probably blocks exit of the E-site tRNA. This chain is Small ribosomal subunit protein uS7, found in Nostoc punctiforme (strain ATCC 29133 / PCC 73102).